Consider the following 154-residue polypeptide: Ribosome maturation factor RimP (154 aa).

Belongs to the RimP family.

It is found in the cytoplasm. In terms of biological role, required for maturation of 30S ribosomal subunits. This is Ribosome maturation factor RimP from Clostridium novyi (strain NT).